A 98-amino-acid polypeptide reads, in one-letter code: NADH-ubiquinone oxidoreductase chain 4L (98 aa).

3 helical membrane-spanning segments follow: residues 2-22 (QMTM…LLMF), 26-46 (FMSS…LMSI), and 59-79 (FPLV…SLLV).

It belongs to the complex I subunit 4L family. Core subunit of respiratory chain NADH dehydrogenase (Complex I) which is composed of 45 different subunits.

The protein localises to the mitochondrion inner membrane. The catalysed reaction is a ubiquinone + NADH + 5 H(+)(in) = a ubiquinol + NAD(+) + 4 H(+)(out). In terms of biological role, core subunit of the mitochondrial membrane respiratory chain NADH dehydrogenase (Complex I) which catalyzes electron transfer from NADH through the respiratory chain, using ubiquinone as an electron acceptor. Part of the enzyme membrane arm which is embedded in the lipid bilayer and involved in proton translocation. The protein is NADH-ubiquinone oxidoreductase chain 4L (MT-ND4L) of Echinosorex gymnura (Moon rat).